Reading from the N-terminus, the 429-residue chain is Enolase 2 (429 aa).

Glutamine 163 contacts (2R)-2-phosphoglycerate. Glutamate 205 acts as the Proton donor in catalysis. Mg(2+) is bound by residues aspartate 242, glutamate 286, and aspartate 313. Positions 338, 367, 368, and 389 each coordinate (2R)-2-phosphoglycerate. Residue lysine 338 is the Proton acceptor of the active site.

It belongs to the enolase family. The cofactor is Mg(2+).

The protein localises to the cytoplasm. It localises to the secreted. The protein resides in the cell surface. The enzyme catalyses (2R)-2-phosphoglycerate = phosphoenolpyruvate + H2O. Its pathway is carbohydrate degradation; glycolysis; pyruvate from D-glyceraldehyde 3-phosphate: step 4/5. Its function is as follows. Catalyzes the reversible conversion of 2-phosphoglycerate (2-PG) into phosphoenolpyruvate (PEP). It is essential for the degradation of carbohydrates via glycolysis. In Lactiplantibacillus plantarum (strain ATCC BAA-793 / NCIMB 8826 / WCFS1) (Lactobacillus plantarum), this protein is Enolase 2.